We begin with the raw amino-acid sequence, 75 residues long: uncharacterized protein (75 aa).

Residues 4–26 (PSLLFLGFSGVLAFGEVGWVGVY) form a helical membrane-spanning segment.

It localises to the membrane. This is an uncharacterized protein from Treponema pallidum (strain Nichols).